Here is a 336-residue protein sequence, read N- to C-terminus: Glucokinase (336 aa).

12 to 17 provides a ligand contact to ATP; that stretch reads ADIGGT.

This sequence belongs to the bacterial glucokinase family.

Its subcellular location is the cytoplasm. The enzyme catalyses D-glucose + ATP = D-glucose 6-phosphate + ADP + H(+). The chain is Glucokinase from Helicobacter pylori (strain ATCC 700392 / 26695) (Campylobacter pylori).